We begin with the raw amino-acid sequence, 203 residues long: MIGKLSGKVDSQGDDYVIIDVNGVGYLVYASDKTLGTLAEGEFYKLFIETHVREEHMHLYGFLTLEEKIFFNLLQSVNGIGTRMALFILSSLTPSDIQIAVNNEDKNIFKAISGVGAKLAERIVLELKGKVAKISSGSAIIKESLNIKNITPVASNEVIKALVNLGFSRFEAQNAVQGIITQNPEISIDELIKTALKNRNSNF.

The segment at 1 to 63 (MIGKLSGKVD…EEHMHLYGFL (63 aa)) is domain I. The interval 64 to 142 (TLEEKIFFNL…KISSGSAIIK (79 aa)) is domain II. The segment at 143–149 (ESLNIKN) is flexible linker. A domain III region spans residues 150-203 (ITPVASNEVIKALVNLGFSRFEAQNAVQGIITQNPEISIDELIKTALKNRNSNF).

This sequence belongs to the RuvA family. Homotetramer. Forms an RuvA(8)-RuvB(12)-Holliday junction (HJ) complex. HJ DNA is sandwiched between 2 RuvA tetramers; dsDNA enters through RuvA and exits via RuvB. An RuvB hexamer assembles on each DNA strand where it exits the tetramer. Each RuvB hexamer is contacted by two RuvA subunits (via domain III) on 2 adjacent RuvB subunits; this complex drives branch migration. In the full resolvosome a probable DNA-RuvA(4)-RuvB(12)-RuvC(2) complex forms which resolves the HJ.

It localises to the cytoplasm. Its function is as follows. The RuvA-RuvB-RuvC complex processes Holliday junction (HJ) DNA during genetic recombination and DNA repair, while the RuvA-RuvB complex plays an important role in the rescue of blocked DNA replication forks via replication fork reversal (RFR). RuvA specifically binds to HJ cruciform DNA, conferring on it an open structure. The RuvB hexamer acts as an ATP-dependent pump, pulling dsDNA into and through the RuvAB complex. HJ branch migration allows RuvC to scan DNA until it finds its consensus sequence, where it cleaves and resolves the cruciform DNA. This Rickettsia peacockii (strain Rustic) protein is Holliday junction branch migration complex subunit RuvA.